The chain runs to 319 residues: Acetyl esterase (319 aa).

The Involved in the stabilization of the negatively charged intermediate by the formation of the oxyanion hole signature appears at His-91–Gly-93. Active-site residues include Ser-165, Asp-262, and His-292.

The protein belongs to the 'GDXG' lipolytic enzyme family. As to quaternary structure, homodimer. Interacts with MalT and MelA.

Its subcellular location is the cytoplasm. In terms of biological role, displays esterase activity towards short chain fatty esters (acyl chain length of up to 8 carbons). Able to hydrolyze triacetylglycerol (triacetin) and tributyrylglycerol (tributyrin), but not trioleylglycerol (triolein) or cholesterol oleate. Negatively regulates MalT activity by antagonizing maltotriose binding. Inhibits MelA galactosidase activity. The chain is Acetyl esterase from Shigella flexneri.